We begin with the raw amino-acid sequence, 59 residues long: Metallothionein-1B (59 aa).

The beta stretch occupies residues 1–29; sequence MPGPCCNDKCVCQEGGCKAGCQCTSCRCS. Cysteine 5, cysteine 6, cysteine 10, cysteine 17, cysteine 21, cysteine 23, cysteine 26, cysteine 28, cysteine 31, cysteine 34, cysteine 38, cysteine 40, cysteine 46, cysteine 50, cysteine 54, cysteine 56, and cysteine 57 together coordinate a divalent metal cation. The segment at 30–59 is alpha; sequence PCQKCTSGCKCATKEECSKTCTKPCSCCPK.

This sequence belongs to the metallothionein superfamily. Type 3 family.

In terms of biological role, binds six divalent metal ions. Known to bind copper and cadmium. The sequence is that of Metallothionein-1B from Callinectes sapidus (Blue crab).